The primary structure comprises 300 residues: uncharacterized protein (300 aa).

Residue His-274 is the Proton acceptor of the active site.

The protein belongs to the AB hydrolase superfamily. As to quaternary structure, monomer.

The enzyme catalyses a carboxylic ester + H2O = an alcohol + a carboxylate + H(+). This is an uncharacterized protein from Bacillus subtilis (strain 168).